A 251-amino-acid polypeptide reads, in one-letter code: MVEDSQETTHFGFQTVAKEQKADMVAHVFHSVASKYDVMNDLMSFGIHRLWKRFTIDCSGVRRGQTVLDLAGGTGDLTAKFSRLVGETGNVILADINDSMLKMGREKLRNIGVIGNVKYVQANAEALPFPDNTFDCITISFGLRNVTEKEKALRSMYRVLKPGGRLLVLEFSKPIIEPLSKAYDAYSFHILPRIGSVVANDADSYRYLAESIRMHPDQDTLKAMMQDAGFESVDYYNLTAGVVALHRGYKF.

S-adenosyl-L-methionine is bound by residues Thr-74, Asp-95, 123-124 (NA), and Ser-140.

It belongs to the class I-like SAM-binding methyltransferase superfamily. MenG/UbiE family.

The catalysed reaction is a 2-demethylmenaquinol + S-adenosyl-L-methionine = a menaquinol + S-adenosyl-L-homocysteine + H(+). It carries out the reaction a 2-methoxy-6-(all-trans-polyprenyl)benzene-1,4-diol + S-adenosyl-L-methionine = a 5-methoxy-2-methyl-3-(all-trans-polyprenyl)benzene-1,4-diol + S-adenosyl-L-homocysteine + H(+). The protein operates within quinol/quinone metabolism; menaquinone biosynthesis; menaquinol from 1,4-dihydroxy-2-naphthoate: step 2/2. Its pathway is cofactor biosynthesis; ubiquinone biosynthesis. Functionally, methyltransferase required for the conversion of demethylmenaquinol (DMKH2) to menaquinol (MKH2) and the conversion of 2-polyprenyl-6-methoxy-1,4-benzoquinol (DDMQH2) to 2-polyprenyl-3-methyl-6-methoxy-1,4-benzoquinol (DMQH2). This is Ubiquinone/menaquinone biosynthesis C-methyltransferase UbiE from Citrobacter koseri (strain ATCC BAA-895 / CDC 4225-83 / SGSC4696).